Reading from the N-terminus, the 261-residue chain is Cytochrome c oxidase subunit 3 (261 aa).

The Mitochondrial matrix portion of the chain corresponds to 1–15 (MTHQTHAYHMVNPSP). Residues 16–34 (WPLTGALSALLMTFGLIMW) traverse the membrane as a helical segment. Residues 35 to 40 (FHFNST) lie on the Mitochondrial intermembrane side of the membrane. The helical transmembrane segment at 41–66 (ALLMLGLTTNMLTMYQWWRDIIREST) threads the bilayer. Residues 67–72 (FQGHHT) are Mitochondrial matrix-facing. A helical membrane pass occupies residues 73-105 (PVVQKGLRYGMILFIISEVLFFTGFFWAFYHSS). The Mitochondrial intermembrane segment spans residues 106–128 (LAPTPELGGCWPPTGIHPLNPLE). A helical transmembrane segment spans residues 129 to 152 (VPLLNTSVLLASGVSITWAHHSLM). Topologically, residues 153–155 (EGH) are mitochondrial matrix. A helical transmembrane segment spans residues 156–183 (RNHMLQALFITIALGVYFTLLQASEYYE). Topologically, residues 184–190 (APFTISD) are mitochondrial intermembrane. Residues 191–223 (GVYGSTFFVATGFHGLHVIIGSTFLIVCFFRQL) traverse the membrane as a helical segment. The Mitochondrial matrix segment spans residues 224–232 (KFHFTSSHH). The chain crosses the membrane as a helical span at residues 233 to 256 (FGFEAAAWYWHFVDVVWLFLYVSI). Residues 257-261 (YWWGS) are Mitochondrial intermembrane-facing.

It belongs to the cytochrome c oxidase subunit 3 family. Component of the cytochrome c oxidase (complex IV, CIV), a multisubunit enzyme composed of 14 subunits. The complex is composed of a catalytic core of 3 subunits MT-CO1, MT-CO2 and MT-CO3, encoded in the mitochondrial DNA, and 11 supernumerary subunits COX4I, COX5A, COX5B, COX6A, COX6B, COX6C, COX7A, COX7B, COX7C, COX8 and NDUFA4, which are encoded in the nuclear genome. The complex exists as a monomer or a dimer and forms supercomplexes (SCs) in the inner mitochondrial membrane with NADH-ubiquinone oxidoreductase (complex I, CI) and ubiquinol-cytochrome c oxidoreductase (cytochrome b-c1 complex, complex III, CIII), resulting in different assemblies (supercomplex SCI(1)III(2)IV(1) and megacomplex MCI(2)III(2)IV(2)).

It is found in the mitochondrion inner membrane. The enzyme catalyses 4 Fe(II)-[cytochrome c] + O2 + 8 H(+)(in) = 4 Fe(III)-[cytochrome c] + 2 H2O + 4 H(+)(out). In terms of biological role, component of the cytochrome c oxidase, the last enzyme in the mitochondrial electron transport chain which drives oxidative phosphorylation. The respiratory chain contains 3 multisubunit complexes succinate dehydrogenase (complex II, CII), ubiquinol-cytochrome c oxidoreductase (cytochrome b-c1 complex, complex III, CIII) and cytochrome c oxidase (complex IV, CIV), that cooperate to transfer electrons derived from NADH and succinate to molecular oxygen, creating an electrochemical gradient over the inner membrane that drives transmembrane transport and the ATP synthase. Cytochrome c oxidase is the component of the respiratory chain that catalyzes the reduction of oxygen to water. Electrons originating from reduced cytochrome c in the intermembrane space (IMS) are transferred via the dinuclear copper A center (CU(A)) of subunit 2 and heme A of subunit 1 to the active site in subunit 1, a binuclear center (BNC) formed by heme A3 and copper B (CU(B)). The BNC reduces molecular oxygen to 2 water molecules using 4 electrons from cytochrome c in the IMS and 4 protons from the mitochondrial matrix. This is Cytochrome c oxidase subunit 3 (MT-CO3) from Tragelaphus oryx (Eland).